We begin with the raw amino-acid sequence, 955 residues long: Glycine dehydrogenase (decarboxylating) (955 aa).

N6-(pyridoxal phosphate)lysine is present on K702.

It belongs to the GcvP family. In terms of assembly, the glycine cleavage system is composed of four proteins: P, T, L and H. Pyridoxal 5'-phosphate serves as cofactor.

It catalyses the reaction N(6)-[(R)-lipoyl]-L-lysyl-[glycine-cleavage complex H protein] + glycine + H(+) = N(6)-[(R)-S(8)-aminomethyldihydrolipoyl]-L-lysyl-[glycine-cleavage complex H protein] + CO2. In terms of biological role, the glycine cleavage system catalyzes the degradation of glycine. The P protein binds the alpha-amino group of glycine through its pyridoxal phosphate cofactor; CO(2) is released and the remaining methylamine moiety is then transferred to the lipoamide cofactor of the H protein. In Stenotrophomonas maltophilia (strain K279a), this protein is Glycine dehydrogenase (decarboxylating).